The chain runs to 544 residues: MSIEQTLSQYLPSHPKPQGVTFTYGTAGFRMKADKLDYVTFTVGIIASLRSKYLQGKTVGVMITASHNPPEDNGVKVVDPLGSMLESSWEKYATDLANASPSPSNDSEGEKNSLVEVIKNLVSDLKIDLSIPANVVIARDSRESSPALSMATIDGFQSVPNTKYQDFGLFTTPELHYVTRTLNDPDFGKPTEDGYYSKLAKSFQEIYTICESNNEKIDITIDAANGVGAPKIQELLEKYLHKEISFTVVNGDYKQPNLLNFDCGADYVKTNQKLPKNVKPVNNKLYASFDGDADRLICYYQNNDNKFKLLDGDKLSTLFALFLQQLFKQIDPTKISLNIGVVQTAYANGSSTKYVEDVLKIPVRCTPTGVKHLHHEAENFDIGVYFEANGHGTVIFNPEAEKKIFDYKPNNDNEAKAIKVLQNFSQLINQTVGDAISDLLAVLIVVHYLKLSPSDWDNEYTDLPNKLVKVIVPDRSIFKTTNAERTLVEPKGMQDEIDKLVAQYPNGRSFVRASGTEDAVRVYAEADTQNNVEELSKAVSELVK.

Residue Ser66 is the Phosphoserine intermediate of the active site. Positions 66, 290, 292, and 294 each coordinate Mg(2+). Residues Glu387–Asn389, Arg512–Thr516, and Arg521 contribute to the substrate site.

Belongs to the phosphohexose mutase family. Mg(2+) is required as a cofactor.

The enzyme catalyses N-acetyl-alpha-D-glucosamine 1-phosphate = N-acetyl-D-glucosamine 6-phosphate. The protein operates within nucleotide-sugar biosynthesis; UDP-N-acetyl-alpha-D-glucosamine biosynthesis; N-acetyl-alpha-D-glucosamine 1-phosphate from alpha-D-glucosamine 6-phosphate (route I): step 2/2. Functionally, catalyzes the conversion of GlcNAc-6-P into GlcNAc-1-P during the synthesis of uridine diphosphate/UDP-GlcNAc, which is a biosynthetic precursor of chitin and also supplies the amino sugars for N-linked oligosaccharides of glycoproteins. This Candida albicans (Yeast) protein is Phosphoacetylglucosamine mutase.